Here is a 96-residue protein sequence, read N- to C-terminus: Small ribosomal subunit protein bS18 (96 aa).

Basic residues predominate over residues 1-18 (MPPPRGKGRFGKDKRPKR). The interval 1–21 (MPPPRGKGRFGKDKRPKRNTQ) is disordered.

Belongs to the bacterial ribosomal protein bS18 family. As to quaternary structure, part of the 30S ribosomal subunit. Forms a tight heterodimer with protein bS6.

Binds as a heterodimer with protein bS6 to the central domain of the 16S rRNA, where it helps stabilize the platform of the 30S subunit. This chain is Small ribosomal subunit protein bS18, found in Methylibium petroleiphilum (strain ATCC BAA-1232 / LMG 22953 / PM1).